Reading from the N-terminus, the 398-residue chain is Phosphoglycerate kinase (398 aa).

Substrate contacts are provided by residues 20–22 (DLN), Arg35, 58–61 (HLGR), Arg118, and Arg155. Residues Lys206, Gly295, Glu326, and 354–357 (GGDS) each bind ATP.

The protein belongs to the phosphoglycerate kinase family. In terms of assembly, monomer.

The protein resides in the cytoplasm. The catalysed reaction is (2R)-3-phosphoglycerate + ATP = (2R)-3-phospho-glyceroyl phosphate + ADP. Its pathway is carbohydrate degradation; glycolysis; pyruvate from D-glyceraldehyde 3-phosphate: step 2/5. The polypeptide is Phosphoglycerate kinase (Onion yellows phytoplasma (strain OY-M)).